Consider the following 415-residue polypeptide: S-inosyl-L-homocysteine hydrolase (415 aa).

Residues aspartate 123 and glutamate 148 each contribute to the substrate site. NAD(+) is bound at residue 149–151 (TTT). Substrate is bound by residues lysine 178 and aspartate 182. NAD(+)-binding positions include asparagine 183, 212-217 (GYGWCG), glutamate 235, 291-293 (AGH), and asparagine 337.

It belongs to the adenosylhomocysteinase family. Requires NAD(+) as cofactor.

It localises to the cytoplasm. It carries out the reaction S-inosyl-L-homocysteine + H2O = L-homocysteine + inosine. The protein operates within amino-acid biosynthesis; S-adenosyl-L-methionine biosynthesis. Catalyzes the hydrolysis of S-inosyl-L-homocysteine (SIH) to L-homocysteine (Hcy) and inosine. Likely functions in a S-adenosyl-L-methionine (SAM) recycling pathway from S-adenosyl-L-homocysteine (SAH) produced from SAM-dependent methylation reactions. Can also catalyze the reverse reaction in vitro, i.e. the synthesis of SIH from Hcy and inosine. The protein is S-inosyl-L-homocysteine hydrolase of Methanococcus maripaludis (strain DSM 14266 / JCM 13030 / NBRC 101832 / S2 / LL).